The primary structure comprises 258 residues: Imidazole glycerol phosphate synthase subunit HisF (258 aa).

Active-site residues include Asp11 and Asp130.

Belongs to the HisA/HisF family. Heterodimer of HisH and HisF.

The protein resides in the cytoplasm. It catalyses the reaction 5-[(5-phospho-1-deoxy-D-ribulos-1-ylimino)methylamino]-1-(5-phospho-beta-D-ribosyl)imidazole-4-carboxamide + L-glutamine = D-erythro-1-(imidazol-4-yl)glycerol 3-phosphate + 5-amino-1-(5-phospho-beta-D-ribosyl)imidazole-4-carboxamide + L-glutamate + H(+). Its pathway is amino-acid biosynthesis; L-histidine biosynthesis; L-histidine from 5-phospho-alpha-D-ribose 1-diphosphate: step 5/9. In terms of biological role, IGPS catalyzes the conversion of PRFAR and glutamine to IGP, AICAR and glutamate. The HisF subunit catalyzes the cyclization activity that produces IGP and AICAR from PRFAR using the ammonia provided by the HisH subunit. The protein is Imidazole glycerol phosphate synthase subunit HisF of Xanthomonas campestris pv. campestris (strain B100).